Here is a 287-residue protein sequence, read N- to C-terminus: Elongation factor Ts (287 aa).

The involved in Mg(2+) ion dislocation from EF-Tu stretch occupies residues 80–83; sequence TDFL.

Belongs to the EF-Ts family.

Its subcellular location is the cytoplasm. Functionally, associates with the EF-Tu.GDP complex and induces the exchange of GDP to GTP. It remains bound to the aminoacyl-tRNA.EF-Tu.GTP complex up to the GTP hydrolysis stage on the ribosome. This is Elongation factor Ts from Pseudomonas syringae pv. tomato (strain ATCC BAA-871 / DC3000).